The sequence spans 1122 residues: Protein phosphatase 1 regulatory subunit 3A (1122 aa).

Residues 32–58 (TFQPGFSPQPSRRGSDSSEDIYLDTPS) are disordered. 2 positions are modified to phosphoserine; by GSK3: Ser38 and Ser42. Ser46 is subject to Phosphoserine; by PKA and ISPK. Position 49 is a phosphoserine (Ser49). Position 56 is a phosphothreonine (Thr56). Residues 62–65 (RRVS) carry the PP1-binding motif motif. Ser65 is modified (phosphoserine; by PKA). Residues 122–230 (QLQIQKAILE…NNNGTNYTFI (109 aa)) form the CBM21 domain. Disordered regions lie at residues 332–351 (STASRDERNTFSTDPVNFPN), 395–422 (SSGDDCTHQPSEETTSNMGEIKPSLGDT), 496–516 (CLKESTEEGSSKEDYYGNGKD), and 640–668 (GINSEDQDNSPQHKQSWNVLESQGKSREN). Composition is skewed to basic and acidic residues over residues 395–405 (SSGDDCTHQPS) and 499–516 (ESTEEGSSKEDYYGNGKD). Positions 640–662 (GINSEDQDNSPQHKQSWNVLESQ) are enriched in polar residues. Position 844 is a phosphoserine (Ser844). The segment covering 963 to 977 (IEKHPYPESKPEEVS) has biased composition (basic and acidic residues). Disordered stretches follow at residues 963 to 983 (IEKHPYPESKPEEVSRSSGIV) and 1025 to 1058 (RHENEGLVSSGQSLYTSGEKESDSSASTSLPVEE). 2 stretches are compositionally biased toward polar residues: residues 1031-1040 (LVSSGQSLYT) and 1048-1058 (SSASTSLPVEE). The chain crosses the membrane as a helical span at residues 1078-1098 (YFLLFLIFLITVYHYDLMIGL).

As to quaternary structure, interacts with PPP1CC catalytic subunit of PP1, and associates with glycogen. In terms of processing, phosphorylation at Ser-46 by ISPK stimulates the dephosphorylation of glycogen synthase and phosphorylase kinase. Skeletal muscle and heart.

The protein localises to the membrane. In terms of biological role, seems to act as a glycogen-targeting subunit for PP1. PP1 is essential for cell division, and participates in the regulation of glycogen metabolism, muscle contractility and protein synthesis. Plays an important role in glycogen synthesis but is not essential for insulin activation of glycogen synthase. The polypeptide is Protein phosphatase 1 regulatory subunit 3A (PPP1R3A) (Homo sapiens (Human)).